The sequence spans 71 residues: Brevinin-1SN1 (71 aa).

The first 22 residues, 1–22 (MFTMKKPLLLLFFLGTINLSLC), serve as a signal peptide directing secretion. The propeptide at 23–45 (EEERNADEEEKRDGDDEMDAEVE) is removed in mature form. Cys-65 and Cys-71 form a disulfide bridge.

This sequence belongs to the frog skin active peptide (FSAP) family. Brevinin subfamily. In terms of tissue distribution, expressed by the skin glands.

The protein localises to the secreted. Antimicrobial peptide. Active against some Gram-negative and a variety of Gram-positive bacterial strains. Active against fungus C.glabrata 090902 but not against C.albicans ATCC 10231. Shows hemolytic activity against human erythrocytes. The sequence is that of Brevinin-1SN1 from Sylvirana spinulosa (Fine-spined frog).